Reading from the N-terminus, the 228-residue chain is ATP synthase subunit a (228 aa).

A run of 6 helical transmembrane segments spans residues Ala-19–Val-39, Leu-81–Phe-101, Ser-107–Ile-127, Phe-136–Ile-156, Leu-178–Leu-198, and Ile-204–Val-224.

The protein belongs to the ATPase A chain family. As to quaternary structure, F-type ATPases have 2 components, CF(1) - the catalytic core - and CF(0) - the membrane proton channel. CF(1) has five subunits: alpha(3), beta(3), gamma(1), delta(1), epsilon(1). CF(0) has three main subunits: a(1), b(2) and c(9-12). The alpha and beta chains form an alternating ring which encloses part of the gamma chain. CF(1) is attached to CF(0) by a central stalk formed by the gamma and epsilon chains, while a peripheral stalk is formed by the delta and b chains.

Its subcellular location is the cell inner membrane. Key component of the proton channel; it plays a direct role in the translocation of protons across the membrane. The protein is ATP synthase subunit a of Campylobacter hominis (strain ATCC BAA-381 / DSM 21671 / CCUG 45161 / LMG 19568 / NCTC 13146 / CH001A).